Reading from the N-terminus, the 355-residue chain is S-adenosylmethionine:tRNA ribosyltransferase-isomerase (355 aa).

Belongs to the QueA family. As to quaternary structure, monomer.

Its subcellular location is the cytoplasm. The catalysed reaction is 7-aminomethyl-7-carbaguanosine(34) in tRNA + S-adenosyl-L-methionine = epoxyqueuosine(34) in tRNA + adenine + L-methionine + 2 H(+). Its pathway is tRNA modification; tRNA-queuosine biosynthesis. Its function is as follows. Transfers and isomerizes the ribose moiety from AdoMet to the 7-aminomethyl group of 7-deazaguanine (preQ1-tRNA) to give epoxyqueuosine (oQ-tRNA). The chain is S-adenosylmethionine:tRNA ribosyltransferase-isomerase from Burkholderia cenocepacia (strain ATCC BAA-245 / DSM 16553 / LMG 16656 / NCTC 13227 / J2315 / CF5610) (Burkholderia cepacia (strain J2315)).